A 347-amino-acid chain; its full sequence is Protein pelota homolog (347 aa).

It belongs to the eukaryotic release factor 1 family. Pelota subfamily. Monomer. It depends on a divalent metal cation as a cofactor.

The protein localises to the cytoplasm. Its function is as follows. May function in recognizing stalled ribosomes, interact with stem-loop structures in stalled mRNA molecules, and effect endonucleolytic cleavage of the mRNA. May play a role in the release non-functional ribosomes and degradation of damaged mRNAs. Has endoribonuclease activity. In Methanocaldococcus jannaschii (strain ATCC 43067 / DSM 2661 / JAL-1 / JCM 10045 / NBRC 100440) (Methanococcus jannaschii), this protein is Protein pelota homolog.